Here is a 90-residue protein sequence, read N- to C-terminus: Progonadoliberin-1 (90 aa).

Residues 1–24 (MSRHVTVVLLLAIVLLLSSHMIHG) form the signal peptide. Residue Q25 is modified to Pyrrolidone carboxylic acid. Residue G34 is modified to Glycine amide.

Belongs to the GnRH family. In terms of tissue distribution, forebrain.

It is found in the secreted. In terms of biological role, stimulates the secretion of gonadotropins. This chain is Progonadoliberin-1 (gnrh1), found in Aquarana catesbeiana (American bullfrog).